We begin with the raw amino-acid sequence, 281 residues long: MNIADGRQAFPAPAKLNLDLRITGRREDGYHNIESIFCLIDLQDTVYLKPRDDGKIILHNPVGGIPQEADLSYRAASLLQKYARNLAGVEIWLDKKIPTGAGLGGGSSDAATVLLVLNRWWQCGLTQWQLIDLGAALGADVPFFIFGKNAFASGIGKKLIGMDIPKQWYVIVKPPVHVSTAKIFTYEGLTRDSASSIMPTFQNLQPFRNDMQAVVFKEYPEVWKAYSELSKYGSAMMTGSGACIFAAFQARNSAYNIYRQVSGLYEAYLAEGLSKHPLLSV.

Residue Lys15 is part of the active site. 98–108 lines the ATP pocket; that stretch reads PTGAGLGGGSS. The active site involves Asp140.

It belongs to the GHMP kinase family. IspE subfamily.

The catalysed reaction is 4-CDP-2-C-methyl-D-erythritol + ATP = 4-CDP-2-C-methyl-D-erythritol 2-phosphate + ADP + H(+). Its pathway is isoprenoid biosynthesis; isopentenyl diphosphate biosynthesis via DXP pathway; isopentenyl diphosphate from 1-deoxy-D-xylulose 5-phosphate: step 3/6. Catalyzes the phosphorylation of the position 2 hydroxy group of 4-diphosphocytidyl-2C-methyl-D-erythritol. This is 4-diphosphocytidyl-2-C-methyl-D-erythritol kinase from Neisseria gonorrhoeae (strain ATCC 700825 / FA 1090).